Consider the following 185-residue polypeptide: Transposon Tn3 resolvase (185 aa).

A Resolvase/invertase-type recombinase catalytic domain is found at R2–G137. S10 serves as the catalytic O-(5'-phospho-DNA)-serine intermediate. Residues A161–E180 constitute a DNA-binding region (H-T-H motif).

The protein belongs to the site-specific recombinase resolvase family.

Its function is as follows. Resolvase catalyzes the resolution (a site-specific recombination) of the cointegrated replicon to yield the final transposition products. The polypeptide is Transposon Tn3 resolvase (tnpR) (Escherichia coli).